The following is a 353-amino-acid chain: Methylthioribose-1-phosphate isomerase (353 aa).

Residues Arg-51–Ala-53, Arg-94, and Gln-199 each bind substrate. Asp-240 (proton donor) is an active-site residue. Residue Asn-250–Lys-251 coordinates substrate.

This sequence belongs to the eIF-2B alpha/beta/delta subunits family. MtnA subfamily. In terms of assembly, homodimer.

It carries out the reaction 5-(methylsulfanyl)-alpha-D-ribose 1-phosphate = 5-(methylsulfanyl)-D-ribulose 1-phosphate. Its pathway is amino-acid biosynthesis; L-methionine biosynthesis via salvage pathway; L-methionine from S-methyl-5-thio-alpha-D-ribose 1-phosphate: step 1/6. Functionally, catalyzes the interconversion of methylthioribose-1-phosphate (MTR-1-P) into methylthioribulose-1-phosphate (MTRu-1-P). In Bacillus velezensis (strain DSM 23117 / BGSC 10A6 / LMG 26770 / FZB42) (Bacillus amyloliquefaciens subsp. plantarum), this protein is Methylthioribose-1-phosphate isomerase.